The primary structure comprises 274 residues: Glutamate racemase (274 aa).

Residues 9 to 10 and 41 to 42 contribute to the substrate site; these read DS and YG. The active-site Proton donor/acceptor is cysteine 73. 74 to 75 is a substrate binding site; the sequence is NT. Residue cysteine 183 is the Proton donor/acceptor of the active site. Substrate is bound at residue 184-185; it reads TH.

The protein belongs to the aspartate/glutamate racemases family.

It catalyses the reaction L-glutamate = D-glutamate. It participates in cell wall biogenesis; peptidoglycan biosynthesis. Provides the (R)-glutamate required for cell wall biosynthesis. The polypeptide is Glutamate racemase (Shewanella baltica (strain OS185)).